The primary structure comprises 421 residues: Phosphatidylinositol 5-phosphate 4-kinase type-2 gamma (421 aa).

N-acetylalanine is present on alanine 2. Serine 26 is subject to Phosphoserine. Residues 43–420 (AADPLVGVFL…RFLDFITNIF (378 aa)) form the PIPK domain. Residues 69 to 75 (VMLLPDD) form a required for interaction with PIP5K1A region. Residue serine 349 is modified to Phosphoserine.

As to quaternary structure, interacts with PIP5K1A; the interaction inhibits PIP5K1A kinase activity. In terms of processing, phosphorylated, phosphorylation is induced by EGF.

Its subcellular location is the endoplasmic reticulum. The protein resides in the cytoplasm. It catalyses the reaction a 1,2-diacyl-sn-glycero-3-phospho-(1D-myo-inositol-5-phosphate) + ATP = a 1,2-diacyl-sn-glycero-3-phospho-(1D-myo-inositol-4,5-bisphosphate) + ADP + H(+). It carries out the reaction 1,2-dihexadecanoyl-sn-glycero-3-phospho-(1D-myo-inositol-5-phosphate) + ATP = 1,2-dihexadecanoyl-sn-glycero-3-phospho-(1D-myo-inositol-4,5-bisphosphate) + ADP + H(+). The enzyme catalyses 1,2-dihexadecanoyl-sn-glycero-3-phospho-(1D-myo-inositol-5-phosphate) + GTP = 1,2-dihexadecanoyl-sn-glycero-3-phospho-(1D-myo-inositol-4,5-bisphosphate) + GDP + H(+). Phosphatidylinositol 5-phosphate 4-kinase with low enzymatic activity. May be a GTP sensor, has higher GTP-dependent kinase activity than ATP-dependent kinase activity. PIP4Ks negatively regulate insulin signaling through a catalytic-independent mechanism. They interact with PIP5Ks and suppress PIP5K-mediated PtdIns(4,5)P2 synthesis and insulin-dependent conversion to PtdIns(3,4,5)P3. In Pongo abelii (Sumatran orangutan), this protein is Phosphatidylinositol 5-phosphate 4-kinase type-2 gamma (PIP4K2C).